Consider the following 352-residue polypeptide: Biotin synthase (352 aa).

One can recognise a Radical SAM core domain in the interval 44-262; it reads NRVQVSTLLS…LAVARIMMPK (219 aa). C59, C63, and C66 together coordinate [4Fe-4S] cluster. Residues C103, C134, C194, and R266 each contribute to the [2Fe-2S] cluster site.

It belongs to the radical SAM superfamily. Biotin synthase family. Homodimer. [4Fe-4S] cluster is required as a cofactor. Requires [2Fe-2S] cluster as cofactor.

The catalysed reaction is (4R,5S)-dethiobiotin + (sulfur carrier)-SH + 2 reduced [2Fe-2S]-[ferredoxin] + 2 S-adenosyl-L-methionine = (sulfur carrier)-H + biotin + 2 5'-deoxyadenosine + 2 L-methionine + 2 oxidized [2Fe-2S]-[ferredoxin]. It participates in cofactor biosynthesis; biotin biosynthesis; biotin from 7,8-diaminononanoate: step 2/2. Catalyzes the conversion of dethiobiotin (DTB) to biotin by the insertion of a sulfur atom into dethiobiotin via a radical-based mechanism. This Pseudomonas aeruginosa (strain LESB58) protein is Biotin synthase.